The chain runs to 96 residues: UPF0235 protein VC0395_A0010/VC395_0502 (96 aa).

Belongs to the UPF0235 family.

The sequence is that of UPF0235 protein VC0395_A0010/VC395_0502 from Vibrio cholerae serotype O1 (strain ATCC 39541 / Classical Ogawa 395 / O395).